Here is a 377-residue protein sequence, read N- to C-terminus: Subtilisin-like protease CPC735_012930 (377 aa).

The N-terminal stretch at 1–20 (MSILFKIFASTLAVVSVVNA) is a signal peptide. A propeptide spanning residues 21–118 (GELLNFENER…VEPDRMASAT (98 aa)) is cleaved from the precursor. The 79-residue stretch at 36-114 (SYIVVMKDGT…HVKYVEPDRM (79 aa)) folds into the Inhibitor I9 domain. The Peptidase S8 domain occupies 128–377 (SWGLGRISHT…NKLLYNKSGF (250 aa)). Catalysis depends on charge relay system residues Asp-160 and His-191. The N-linked (GlcNAc...) asparagine glycan is linked to Asn-252. Residue Ser-323 is the Charge relay system of the active site. Asn-364 and Asn-373 each carry an N-linked (GlcNAc...) asparagine glycan.

Belongs to the peptidase S8 family.

It localises to the secreted. Its function is as follows. Secreted subtilisin-like serine protease with keratinolytic activity that contributes to pathogenicity. The sequence is that of Subtilisin-like protease CPC735_012930 from Coccidioides posadasii (strain C735) (Valley fever fungus).